We begin with the raw amino-acid sequence, 87 residues long: DNA-directed RNA polymerase subunit omega (87 aa).

This sequence belongs to the RNA polymerase subunit omega family. As to quaternary structure, the RNAP catalytic core consists of 2 alpha, 1 beta, 1 beta' and 1 omega subunit. When a sigma factor is associated with the core the holoenzyme is formed, which can initiate transcription.

It catalyses the reaction RNA(n) + a ribonucleoside 5'-triphosphate = RNA(n+1) + diphosphate. Promotes RNA polymerase assembly. Latches the N- and C-terminal regions of the beta' subunit thereby facilitating its interaction with the beta and alpha subunits. The protein is DNA-directed RNA polymerase subunit omega of Azotobacter vinelandii (strain DJ / ATCC BAA-1303).